Here is a 212-residue protein sequence, read N- to C-terminus: Glycerol-3-phosphate acyltransferase (212 aa).

Helical transmembrane passes span 3-23 (ILLA…VVVS), 78-98 (DVAV…PVFF), 115-135 (AVHP…AFFF), and 155-177 (FLFG…LLVW).

The protein belongs to the PlsY family. Probably interacts with PlsX.

The protein localises to the cell inner membrane. It catalyses the reaction an acyl phosphate + sn-glycerol 3-phosphate = a 1-acyl-sn-glycero-3-phosphate + phosphate. The protein operates within lipid metabolism; phospholipid metabolism. In terms of biological role, catalyzes the transfer of an acyl group from acyl-phosphate (acyl-PO(4)) to glycerol-3-phosphate (G3P) to form lysophosphatidic acid (LPA). This enzyme utilizes acyl-phosphate as fatty acyl donor, but not acyl-CoA or acyl-ACP. In Burkholderia ambifaria (strain ATCC BAA-244 / DSM 16087 / CCUG 44356 / LMG 19182 / AMMD) (Burkholderia cepacia (strain AMMD)), this protein is Glycerol-3-phosphate acyltransferase.